A 364-amino-acid chain; its full sequence is MFSSSWQQVPKFVVQQVRTATKRAAGSRTSMKDSAGRRLGPKKYEGQATQVGEIIMRQRGTKFYPGENVGIGKDHTLFALEPGYVRYYLDPFHPGKKFIGVSLYKDVKLPLPHFEPRLRRFGKAIIEDEEKAIAEENALPRKIYLLKDELIKKQQEREIKREELKAEYSKIISDLKVELDQQELAFALPYLLRWRTCLKNGFNESDARFNSYYYLEQELKLKMRNQEKSKLDDKLTLLKQVSTKLNESLSFNNKLELTKYISPEEKNTLKTQLITDLKAIDIKDKNSKKQVLAKFTDAKNFLTLSEEVRLRRKFLKPVKPETELKKLEEPLKPSKKNLTTRRYNYEQNTIDVITRPKTDFLSKL.

A mitochondrion-targeting transit peptide spans Met1–Thr19.

It belongs to the bacterial ribosomal protein bL27 family.

Its subcellular location is the mitochondrion. Functionally, component of the large subunit of mitochondrial ribosome. The protein is Large ribosomal subunit protein bL27m (MRPL2) of Kluyveromyces lactis (strain ATCC 8585 / CBS 2359 / DSM 70799 / NBRC 1267 / NRRL Y-1140 / WM37) (Yeast).